Here is a 323-residue protein sequence, read N- to C-terminus: 4-hydroxy-3-methylbut-2-enyl diphosphate reductase (323 aa).

Cys-21 is a binding site for [4Fe-4S] cluster. Residues His-50 and His-83 each contribute to the (2E)-4-hydroxy-3-methylbut-2-enyl diphosphate site. Positions 50 and 83 each coordinate dimethylallyl diphosphate. Residues His-50 and His-83 each contribute to the isopentenyl diphosphate site. Cys-105 contributes to the [4Fe-4S] cluster binding site. Position 133 (His-133) interacts with (2E)-4-hydroxy-3-methylbut-2-enyl diphosphate. His-133 serves as a coordination point for dimethylallyl diphosphate. Residue His-133 coordinates isopentenyl diphosphate. Residue Glu-135 is the Proton donor of the active site. Residue Thr-173 participates in (2E)-4-hydroxy-3-methylbut-2-enyl diphosphate binding. Residue Cys-203 participates in [4Fe-4S] cluster binding. Ser-231, Ser-232, Asn-233, and Ser-276 together coordinate (2E)-4-hydroxy-3-methylbut-2-enyl diphosphate. Ser-231, Ser-232, Asn-233, and Ser-276 together coordinate dimethylallyl diphosphate. Isopentenyl diphosphate contacts are provided by Ser-231, Ser-232, Asn-233, and Ser-276.

This sequence belongs to the IspH family. [4Fe-4S] cluster serves as cofactor.

The catalysed reaction is isopentenyl diphosphate + 2 oxidized [2Fe-2S]-[ferredoxin] + H2O = (2E)-4-hydroxy-3-methylbut-2-enyl diphosphate + 2 reduced [2Fe-2S]-[ferredoxin] + 2 H(+). It carries out the reaction dimethylallyl diphosphate + 2 oxidized [2Fe-2S]-[ferredoxin] + H2O = (2E)-4-hydroxy-3-methylbut-2-enyl diphosphate + 2 reduced [2Fe-2S]-[ferredoxin] + 2 H(+). The protein operates within isoprenoid biosynthesis; dimethylallyl diphosphate biosynthesis; dimethylallyl diphosphate from (2E)-4-hydroxy-3-methylbutenyl diphosphate: step 1/1. It participates in isoprenoid biosynthesis; isopentenyl diphosphate biosynthesis via DXP pathway; isopentenyl diphosphate from 1-deoxy-D-xylulose 5-phosphate: step 6/6. Catalyzes the conversion of 1-hydroxy-2-methyl-2-(E)-butenyl 4-diphosphate (HMBPP) into a mixture of isopentenyl diphosphate (IPP) and dimethylallyl diphosphate (DMAPP). Acts in the terminal step of the DOXP/MEP pathway for isoprenoid precursor biosynthesis. This is 4-hydroxy-3-methylbut-2-enyl diphosphate reductase from Cutibacterium acnes (strain DSM 16379 / KPA171202) (Propionibacterium acnes).